We begin with the raw amino-acid sequence, 576 residues long: Arginine--tRNA ligase (576 aa).

The 'HIGH' region signature appears at 122–132 (PNVAKEMHVGH).

The protein belongs to the class-I aminoacyl-tRNA synthetase family. Monomer.

Its subcellular location is the cytoplasm. The enzyme catalyses tRNA(Arg) + L-arginine + ATP = L-arginyl-tRNA(Arg) + AMP + diphosphate. The polypeptide is Arginine--tRNA ligase (Pectobacterium atrosepticum (strain SCRI 1043 / ATCC BAA-672) (Erwinia carotovora subsp. atroseptica)).